A 588-amino-acid chain; its full sequence is Snake venom 5'-nucleotidase (588 aa).

The N-terminal stretch at 1–40 (MQTPKRRRGAQGCPRSSPSPPLLLLVRAVWFCAALSVAAG) is a signal peptide. Positions 51 and 53 each coordinate Zn(2+). Cysteines 66 and 71 form a disulfide. Asp-99 and Asn-131 together coordinate Zn(2+). The N-linked (GlcNAc...) asparagine glycan is linked to Asn-167. Residues His-234 and His-257 each contribute to the Zn(2+) site. N-linked (GlcNAc...) asparagine glycosylation is found at Asn-347 and Asn-361. Disulfide bonds link Cys-367-Cys-372 and Cys-379-Cys-401. Arg-368 is an AMP binding site. 2 residues coordinate AMP: Asn-404 and Arg-409. Asn-418 carries an N-linked (GlcNAc...) asparagine glycan. An AMP-binding site is contributed by Phe-432. An intrachain disulfide couples Cys-491 to Cys-494. Phe-515 and Asp-521 together coordinate AMP. The N-linked (GlcNAc...) asparagine glycan is linked to Asn-532. The GPI-anchor amidated serine moiety is linked to residue Ser-564. Residues 565–588 (AGTLFQAQLFLTWGLCVSLLYFIL) constitute a propeptide, removed in mature form.

Belongs to the 5'-nucleotidase family. The cofactor is Zn(2+). In terms of processing, venom 5'-nucleotidases (or a part thereof) may be released into the venom via exosome-like vesicles. They may be attached via a GPI anchor to the membrane of these vesicles. Soluble forms of 5'-nucleotidase might be released by cleavage of the ectodomain in the exosome-like vesicles or venom gland cells. Expressed by the venom gland.

The protein resides in the membrane. The enzyme catalyses a ribonucleoside 5'-phosphate + H2O = a ribonucleoside + phosphate. Functionally, hydrolyzes nucleotides into nucleosides. Snake venom 5'-nucleotidases are widely distributed among venomous snake taxa, but there is a lack of information about their biological activities. They have been shown to inhibit platelet aggregation. This effect may be due to the liberation of inhibitory AMP or adenosine by its action on ADP released upon initiation of aggregation. Venom 5'-nucleotidases are also known to synergistically act in vivo with other toxins like ADPases, phospholipases, and disintegrins to exert a more pronounced anti-coagulant effect. The protein is Snake venom 5'-nucleotidase of Crotalus adamanteus (Eastern diamondback rattlesnake).